A 172-amino-acid chain; its full sequence is C-phycocyanin beta chain (172 aa).

Residues Asn35, Asp39, Asn72, Arg77, Cys82, 82–88, 149–151, and Cys153 contribute to the (2R,3E)-phycocyanobilin site; these read CLRDMEI and TTG. Asn72 is modified (N4-methylasparagine).

It belongs to the phycobiliprotein family. Heterodimer of an alpha and a beta subunit. Dimers further assemble into trimers and the trimers into hexamers. The basic functional unit of phycobiliproteins is a ring-shaped hexamer formed from two back-to-back trimers contacting via the alpha chain subunits. The trimers are composed of alpha/beta subunit heterodimers arranged around a three-fold axis of symmetry. The phycoerythrins also contain a gamma subunit which is located in the center of the hexamer. Post-translationally, contains two covalently linked phycocyanobilin chromophores.

The protein resides in the plastid. The protein localises to the chloroplast thylakoid membrane. Functionally, light-harvesting photosynthetic tetrapyrrole chromophore-protein from the phycobiliprotein complex (phycobilisome, PBS). Phycocyanin is the major phycobiliprotein in the PBS rod. The polypeptide is C-phycocyanin beta chain (cpcB) (Galdieria sulphuraria (Red alga)).